An 891-amino-acid polypeptide reads, in one-letter code: DNA mismatch repair protein MutS (891 aa).

An ATP-binding site is contributed by 634-641 (GPNMGGKS).

It belongs to the DNA mismatch repair MutS family.

This protein is involved in the repair of mismatches in DNA. It is possible that it carries out the mismatch recognition step. This protein has a weak ATPase activity. This Burkholderia pseudomallei (strain 1106a) protein is DNA mismatch repair protein MutS.